Here is a 333-residue protein sequence, read N- to C-terminus: Probable G-protein coupled receptor 33 (333 aa).

The Extracellular segment spans residues 1 to 30 (MDLINSTDYLINASTLVRNSTQFLAPASKM). Residues asparagine 5, asparagine 12, and asparagine 19 are each glycosylated (N-linked (GlcNAc...) asparagine). Residues 31-53 (IIALSLYISSIIGTITNGLYLWV) form a helical membrane-spanning segment. Topologically, residues 54 to 64 (LRFKMKQTVNT) are cytoplasmic. Residues 65–86 (LLFFHLILSYFISTMILPFMAT) form a helical membrane-spanning segment. The Extracellular segment spans residues 87–103 (SQLQDNHWNFGTALCKV). A disulfide bridge links cysteine 101 with cysteine 179. The chain crosses the membrane as a helical span at residues 104 to 124 (FNGTLSLGMFTSVFFLSAIGL). Residues 125–143 (DRYLLTLHPVWSQQHRTPR) are Cytoplasmic-facing. A helical transmembrane segment spans residues 144 to 165 (WASSIVLGVWISAAALSIPYLI). Topologically, residues 166 to 209 (FRETHHDRKGKVTCQNNYAVSTNWESKEMQASRQWIHVACFISR) are extracellular. Residues 210 to 230 (FLLGFLLPFFIIIFCYERVAS) form a helical membrane-spanning segment. Residues 231–246 (KVKERSLFKSSKPFKV) lie on the Cytoplasmic side of the membrane. Residues 247–268 (MMTAIISFFVCWMPYHIHQGLL) traverse the membrane as a helical segment. Over 269-283 (LTTNQSLLLELTLIL) the chain is Extracellular. The N-linked (GlcNAc...) asparagine glycan is linked to asparagine 272. Residues 284 to 303 (TVLTTSFNTIFSPTLYLFVG) form a helical membrane-spanning segment. Topologically, residues 304–333 (ENFKKVFKKSILALFESTFSEDSSVERTQT) are cytoplasmic.

Belongs to the G-protein coupled receptor 1 family. Expressed in spleen, lung, heart, liver, kidney, pancreas, thymus, gonads and leukocytes.

Its subcellular location is the cell membrane. In terms of biological role, orphan receptor; could be a chemoattractant receptor. This is Probable G-protein coupled receptor 33 (GPR33) from Homo sapiens (Human).